The primary structure comprises 515 residues: Folate synthesis bifunctional protein, mitochondrial (515 aa).

The transit peptide at 1–28 directs the protein to the mitochondrion; it reads MSILKCLGVRGNQLCAARNYLKVLGFSS. Residues 47-172 are HPPK; that stretch reads VIALGSNVGD…PFVMAPLMDL (126 aa). The Pterin-binding domain occupies 230–498; the sequence is TLVMGILNLT…NVKDNLDAVK (269 aa). The interval 232 to 515 is DHPS; sequence VMGILNLTPD…QKSSPIKFKQ (284 aa). N237 is a Mg(2+) binding site. (7,8-dihydropterin-6-yl)methyl diphosphate-binding positions include T277, D314, N333, D406, K451, and 486 to 488; that span reads RVH.

This sequence in the N-terminal section; belongs to the HPPK family. In the C-terminal section; belongs to the DHPS family. Homomultimer. Mg(2+) is required as a cofactor.

It localises to the mitochondrion. It carries out the reaction 6-hydroxymethyl-7,8-dihydropterin + ATP = (7,8-dihydropterin-6-yl)methyl diphosphate + AMP + H(+). The catalysed reaction is (7,8-dihydropterin-6-yl)methyl diphosphate + 4-aminobenzoate = 7,8-dihydropteroate + diphosphate. It functions in the pathway cofactor biosynthesis; tetrahydrofolate biosynthesis; 2-amino-4-hydroxy-6-hydroxymethyl-7,8-dihydropteridine diphosphate from 7,8-dihydroneopterin triphosphate: step 4/4. Its pathway is cofactor biosynthesis; tetrahydrofolate biosynthesis; 7,8-dihydrofolate from 2-amino-4-hydroxy-6-hydroxymethyl-7,8-dihydropteridine diphosphate and 4-aminobenzoate: step 1/2. Functionally, catalyzes the first two consecutive steps of tetrahydrofolate biosynthesis. This Pisum sativum (Garden pea) protein is Folate synthesis bifunctional protein, mitochondrial.